The chain runs to 441 residues: Zinc finger and BTB domain-containing protein 26 (441 aa).

In terms of domain architecture, BTB spans 33-97; the sequence is CDVTVLIDDI…CYSGVLEFPE (65 aa). Residues 134–177 are disordered; the sequence is DSKEGCEPQSASPQSKEQQGDARGSPKQDSPCIHPSEDSMDMED. Residue Lys184 forms a Glycyl lysine isopeptide (Lys-Gly) (interchain with G-Cter in SUMO2) linkage. A disordered region spans residues 194 to 216; sequence VRSKKDQNQFISSEPTALHSSEP. The span at 201-216 shows a compositional bias: polar residues; that stretch reads NQFISSEPTALHSSEP. Residue Lys255 forms a Glycyl lysine isopeptide (Lys-Gly) (interchain with G-Cter in SUMO2) linkage. 4 C2H2-type zinc fingers span residues 273–295, 298–320, 326–348, and 354–377; these read HQCP…LKMH, FMCL…MRVH, FQCK…LNLH, and HKCN…KQLH. A Glycyl lysine isopeptide (Lys-Gly) (interchain with G-Cter in SUMO2) cross-link involves residue Lys329.

In terms of tissue distribution, ubiquitous.

Its subcellular location is the nucleus. May be involved in transcriptional regulation. In Homo sapiens (Human), this protein is Zinc finger and BTB domain-containing protein 26 (ZBTB26).